The sequence spans 180 residues: Nucleoplasmin-3 (180 aa).

N-acetylalanine is present on Ala-2. Residues Ser-13 and Ser-16 each carry the phosphoserine modification. Arg-27 is modified (omega-N-methylarginine). Positions 141–180 (TMSNDVSEEESEEEEEEEDSDEEEAELCPILPAKKQGGRP) are disordered. The span at 146–166 (VSEEESEEEEEEEDSDEEEAE) shows a compositional bias: acidic residues. Ser-147, Ser-151, and Ser-160 each carry phosphoserine.

Belongs to the nucleoplasmin family. Interacts with NPM (via N-terminus). Forms a pentamer with NPM at a ratio 4:1 (NPM3/NPM). Two pentamers form a decamer. Phosphorylated.

The protein resides in the nucleus. It localises to the nucleolus. In terms of biological role, plays a role in the regulation of diverse cellular processes such as ribosome biogenesis, chromatin remodeling or protein chaperoning. Modulates the histone chaperone function and the RNA-binding activity of nucleolar phosphoprotein B23/NPM. Efficiently mediates chromatin remodeling when included in a pentamer containing NPM3 and NPM. This chain is Nucleoplasmin-3 (NPM3), found in Pongo abelii (Sumatran orangutan).